A 701-amino-acid chain; its full sequence is Low-density lipoprotein receptor-related protein 12 (701 aa).

The Extracellular segment spans residues 1–334 (GKSEEPNCAC…ENCPVIVPTR (334 aa)). LDL-receptor class A domains are found at residues 7–43 (NCAC…EICA) and 56–97 (PCAY…IDCD). 7 cysteine pairs are disulfide-bonded: Cys-8-Cys-20, Cys-15-Cys-33, Cys-27-Cys-42, Cys-57-Cys-74, Cys-64-Cys-87, Cys-81-Cys-96, and Cys-101-Cys-127. Residues 101-214 (CGQWLKYFYG…RGFNATYQVD (114 aa)) form the CUB domain. Asn-126 and Asn-208 each carry an N-linked (GlcNAc...) asparagine glycan. LDL-receptor class A domains are found at residues 216–253 (FCLP…INCT), 254–291 (MCQK…KNCF), and 292–328 (FCQP…ENCP). 9 disulfides stabilise this stretch: Cys-217–Cys-230, Cys-224–Cys-243, Cys-237–Cys-252, Cys-255–Cys-268, Cys-262–Cys-281, Cys-275–Cys-290, Cys-293–Cys-305, Cys-300–Cys-318, and Cys-312–Cys-327. Residue Asn-251 is glycosylated (N-linked (GlcNAc...) asparagine). Asn-283 is a glycosylation site (N-linked (GlcNAc...) asparagine). The helical transmembrane segment at 335–355 (VITAAVIGSLICGLLLVIALG) threads the bilayer. Topologically, residues 356–701 (CTCKLYSLRM…TSDDEALLLC (346 aa)) are cytoplasmic. Disordered stretches follow at residues 465-520 (ADGD…LPQK), 535-565 (ASSS…SPAR), 590-612 (SSVS…REDD), and 643-665 (DQGQ…SNRD). Polar residues-rich tracts occupy residues 590 to 599 (SSVSQNQSPL) and 643 to 656 (DQGQ…SATN).

The protein belongs to the LDLR family. In terms of assembly, may interact with RACK1, ZFYVE9 and NMRK2.

It is found in the membrane. The protein resides in the coated pit. Probable receptor, which may be involved in the internalization of lipophilic molecules and/or signal transduction. May act as a tumor suppressor. This Macaca fascicularis (Crab-eating macaque) protein is Low-density lipoprotein receptor-related protein 12 (LRP12).